The primary structure comprises 397 residues: Pectate lyase (397 aa).

A signal peptide spans 1 to 25; sequence MDVYRIRISVFFLLVLLTFAALTTA. A glycan (N-linked (GlcNAc...) asparagine) is linked at asparagine 134. Ca(2+)-binding residues include aspartate 191, aspartate 216, and aspartate 220. Asparagine 227 carries N-linked (GlcNAc...) asparagine glycosylation. Arginine 272 is an active-site residue.

It belongs to the polysaccharide lyase 1 family. Ca(2+) is required as a cofactor.

It carries out the reaction Eliminative cleavage of (1-&gt;4)-alpha-D-galacturonan to give oligosaccharides with 4-deoxy-alpha-D-galact-4-enuronosyl groups at their non-reducing ends.. Its pathway is glycan metabolism; pectin degradation; 2-dehydro-3-deoxy-D-gluconate from pectin: step 2/5. The sequence is that of Pectate lyase from Nicotiana tabacum (Common tobacco).